Here is a 510-residue protein sequence, read N- to C-terminus: Bifunctional purine biosynthesis protein PurH (510 aa).

Residues 1–142 (MRALLSVSDK…KNYKDVMVLC (142 aa)) enclose the MGS-like domain.

It belongs to the PurH family.

The catalysed reaction is (6R)-10-formyltetrahydrofolate + 5-amino-1-(5-phospho-beta-D-ribosyl)imidazole-4-carboxamide = 5-formamido-1-(5-phospho-D-ribosyl)imidazole-4-carboxamide + (6S)-5,6,7,8-tetrahydrofolate. It carries out the reaction IMP + H2O = 5-formamido-1-(5-phospho-D-ribosyl)imidazole-4-carboxamide. It functions in the pathway purine metabolism; IMP biosynthesis via de novo pathway; 5-formamido-1-(5-phospho-D-ribosyl)imidazole-4-carboxamide from 5-amino-1-(5-phospho-D-ribosyl)imidazole-4-carboxamide (10-formyl THF route): step 1/1. Its pathway is purine metabolism; IMP biosynthesis via de novo pathway; IMP from 5-formamido-1-(5-phospho-D-ribosyl)imidazole-4-carboxamide: step 1/1. This chain is Bifunctional purine biosynthesis protein PurH, found in Campylobacter jejuni (strain RM1221).